Consider the following 333-residue polypeptide: Electron transfer flavoprotein subunit alpha, mitochondrial (333 aa).

A mitochondrion-targeting transit peptide spans 1–19 (MFRAAAPGQLRRAASSLRF). A domain I region spans residues 20–204 (QSTLVIAEHA…EISEWLDQKL (185 aa)). K59 is subject to N6-acetyllysine; alternate. Position 59 is an N6-succinyllysine; alternate (K59). K62 carries the post-translational modification N6-acetyllysine. K69 carries the post-translational modification N6-acetyllysine; alternate. K69 carries the post-translational modification N6-succinyllysine; alternate. An N6-acetyllysine modification is found at K75. T93 carries the phosphothreonine modification. K101 and K139 each carry N6-acetyllysine. Residue S140 is modified to Phosphoserine. Residue K158 is modified to N6-acetyllysine; alternate. An N6-succinyllysine; alternate modification is found at K158. Residue K164 is modified to N6-acetyllysine. At K187 the chain carries N6-succinyllysine. An N6-acetyllysine; alternate modification is found at K203. At K203 the chain carries N6-succinyllysine; alternate. Residues 205-333 (TKSDRPELTG…PEMTEILKKK (129 aa)) are domain II. K216 is subject to N6-succinyllysine. R223 is a binding site for FAD. N6-acetyllysine; alternate is present on residues K226 and K232. N6-succinyllysine; alternate is present on residues K226 and K232. FAD is bound by residues S248, 263 to 266 (VGQT), 281 to 286 (SGAIQH), and N300. K301 is subject to N6-succinyllysine. Position 318–319 (318–319 (DL)) interacts with FAD.

The protein belongs to the ETF alpha-subunit/FixB family. As to quaternary structure, heterodimer composed of ETFA and ETFB. Identified in a complex that contains ETFA, ETFB and ETFRF1. Interaction with ETFRF1 promotes dissociation of the bound FAD and loss of electron transfer activity. Interacts with TASOR. It depends on FAD as a cofactor.

The protein localises to the mitochondrion matrix. Its function is as follows. Heterodimeric electron transfer flavoprotein that accepts electrons from several mitochondrial dehydrogenases, including acyl-CoA dehydrogenases, glutaryl-CoA and sarcosine dehydrogenase. It transfers the electrons to the main mitochondrial respiratory chain via ETF-ubiquinone oxidoreductase (ETF dehydrogenase). Required for normal mitochondrial fatty acid oxidation and normal amino acid metabolism. The protein is Electron transfer flavoprotein subunit alpha, mitochondrial (ETFA) of Macaca fascicularis (Crab-eating macaque).